Here is a 134-residue protein sequence, read N- to C-terminus: Small ribosomal subunit protein uS12 (134 aa).

A disordered region spans residues 1–27 (MPTIQQLVRKGRESFADKSKSPALNSC). A compositionally biased stretch (basic and acidic residues) spans 10–20 (KGRESFADKSK). The residue at position 89 (Asp89) is a 3-methylthioaspartic acid. The tract at residues 103–134 (DTAGVNGRTQRRSKYGAKRPKPGQAPAAKGKK) is disordered. Basic residues predominate over residues 111-123 (TQRRSKYGAKRPK). Residues 124 to 134 (PGQAPAAKGKK) show a composition bias toward low complexity.

Belongs to the universal ribosomal protein uS12 family. Part of the 30S ribosomal subunit. Contacts proteins S8 and S17. May interact with IF1 in the 30S initiation complex.

In terms of biological role, with S4 and S5 plays an important role in translational accuracy. Interacts with and stabilizes bases of the 16S rRNA that are involved in tRNA selection in the A site and with the mRNA backbone. Located at the interface of the 30S and 50S subunits, it traverses the body of the 30S subunit contacting proteins on the other side and probably holding the rRNA structure together. The combined cluster of proteins S8, S12 and S17 appears to hold together the shoulder and platform of the 30S subunit. The chain is Small ribosomal subunit protein uS12 from Porphyromonas gingivalis (strain ATCC 33277 / DSM 20709 / CIP 103683 / JCM 12257 / NCTC 11834 / 2561).